The sequence spans 85 residues: Large ribosomal subunit protein bL27 (85 aa).

A disordered region spans residues 1 to 20; it reads MAHKKAAGSTRNGRDSEAKR.

It belongs to the bacterial ribosomal protein bL27 family.

The sequence is that of Large ribosomal subunit protein bL27 from Colwellia psychrerythraea (strain 34H / ATCC BAA-681) (Vibrio psychroerythus).